A 340-amino-acid chain; its full sequence is Guanine nucleotide-binding protein G(I)/G(S)/G(T) subunit beta-1 (340 aa).

At serine 2 the chain carries N-acetylserine. Serine 2 is subject to Phosphoserine. 7 WD repeats span residues 46-94, 95-140, 141-181, 182-223, 224-267, 268-309, and 310-340; these read RTRR…HAIP, LRSS…RELA, GHTG…TTFT, GHTG…QTFT, GHES…YSHD, NIIC…GVLA, and GHDD…KIWN. Phosphohistidine is present on histidine 266.

Belongs to the WD repeat G protein beta family. In terms of assembly, g proteins are composed of 3 units, alpha, beta and gamma. The heterodimer formed by GNB1 and GNG2 interacts with ARHGEF5. The heterodimer formed by GNB1 and GNG2 interacts with GRK2. Forms a complex with GNAO1 and GNG3. Interacts with ARHGEF18 and RASD2. Forms complexes with TAS2R14 and G-proteins; these complexes play a role in the perception of bitterness. Component of the TAS2R14-GNAI1 complex, consisting of TAS2R14, GNAI1, GNB1 and GNG2. Component of the TAS2R14-GNAT3 complex, consisting of TAS2R14, GNAT3, GNB1 and GNG2. Component of the TAS2R14-GNAS2 complex, consisting of TAS2R14, GNAS2, GNB1 and GNG2. Post-translationally, phosphorylation at His-266 by NDKB contributes to G protein activation by increasing the high energetic phosphate transfer onto GDP.

In terms of biological role, guanine nucleotide-binding proteins (G proteins) are involved as a modulator or transducer in various transmembrane signaling systems. The beta and gamma chains are required for the GTPase activity, for replacement of GDP by GTP, and for G protein-effector interaction. This is Guanine nucleotide-binding protein G(I)/G(S)/G(T) subunit beta-1 (GNB1) from Pongo abelii (Sumatran orangutan).